A 615-amino-acid polypeptide reads, in one-letter code: Putative lipase ATG15 (615 aa).

Topologically, residues 1–22 (MKQLGEEHPLISTKRPRAKKRR) are cytoplasmic. The helical; Signal-anchor for type II membrane protein transmembrane segment at 23 to 43 (SIAICAAVLTLIAFGFIRFVP) threads the bilayer. At 44–615 (KDILAGGWYE…NSAAHHVSSI (572 aa)) the chain is on the lumenal side. Asparagine 253, asparagine 276, and asparagine 360 each carry an N-linked (GlcNAc...) asparagine glycan. Serine 378 functions as the Charge relay system in the catalytic mechanism. Residues 520 to 559 (NKNDEPPLPNPLHPKPPSTVRSSNMPHEQSPNASRSLSSL) form a disordered region. Residues 525–536 (PPLPNPLHPKPP) show a composition bias toward pro residues. Over residues 538-559 (TVRSSNMPHEQSPNASRSLSSL) the composition is skewed to polar residues. Asparagine 551 carries N-linked (GlcNAc...) asparagine glycosylation.

It belongs to the AB hydrolase superfamily. Lipase family. As to quaternary structure, binds to both phosphatidylinositol (PI) and phosphatidylinositol 3,5-bisphosphate (PIP2).

The protein localises to the endosome. Its subcellular location is the multivesicular body membrane. The protein resides in the prevacuolar compartment membrane. The enzyme catalyses a triacylglycerol + H2O = a diacylglycerol + a fatty acid + H(+). Lipase which is essential for lysis of subvacuolar cytoplasm to vacuole targeted bodies and intravacuolar autophagic bodies. Involved in the lysis of intravacuolar multivesicular body (MVB) vesicles. The intravacuolar membrane disintegration by ATG15 is critical to life span extension. This Debaryomyces hansenii (strain ATCC 36239 / CBS 767 / BCRC 21394 / JCM 1990 / NBRC 0083 / IGC 2968) (Yeast) protein is Putative lipase ATG15 (ATG15).